Reading from the N-terminus, the 151-residue chain is Cyanate hydratase (151 aa).

Catalysis depends on residues arginine 92, glutamate 95, and serine 118.

It belongs to the cyanase family.

The enzyme catalyses cyanate + hydrogencarbonate + 3 H(+) = NH4(+) + 2 CO2. Functionally, catalyzes the reaction of cyanate with bicarbonate to produce ammonia and carbon dioxide. This Coprinopsis cinerea (strain Okayama-7 / 130 / ATCC MYA-4618 / FGSC 9003) (Inky cap fungus) protein is Cyanate hydratase.